We begin with the raw amino-acid sequence, 152 residues long: Small ribosomal subunit protein uS13 (152 aa).

Position 41 is a phosphoserine (Ser-41).

Belongs to the universal ribosomal protein uS13 family.

Its subcellular location is the cytoplasm. Located at the top of the head of the 40S subunit, it contacts several helices of the 18S rRNA. In Drosophila melanogaster (Fruit fly), this protein is Small ribosomal subunit protein uS13 (RpS18).